Here is a 790-residue protein sequence, read N- to C-terminus: Ribonucleoside-diphosphate reductase large subunit (790 aa).

Substrate is bound by residues Thr-208, 223–224 (SC), Gly-254, 436–440 (NLCTE), and 621–625 (PTVSS). Cys-224 and Cys-453 are oxidised to a cystine. Asn-436 (proton acceptor) is an active-site residue. Cys-438 serves as the catalytic Cysteine radical intermediate. The active-site Proton acceptor is Glu-440.

Belongs to the ribonucleoside diphosphate reductase large chain family. As to quaternary structure, heterotetramer composed of a homodimer of the large subunit (R1) and a homodimer of the small subunit (R2). Larger multisubunit protein complex are also active, composed of (R1)n(R2)n.

The catalysed reaction is a 2'-deoxyribonucleoside 5'-diphosphate + [thioredoxin]-disulfide + H2O = a ribonucleoside 5'-diphosphate + [thioredoxin]-dithiol. In terms of biological role, ribonucleoside-diphosphate reductase holoenzyme provides the precursors necessary for viral DNA synthesis. Allows virus growth in non-dividing cells, as well as reactivation from latency in infected hosts. Catalyzes the biosynthesis of deoxyribonucleotides from the corresponding ribonucleotides. This Equus caballus (Horse) protein is Ribonucleoside-diphosphate reductase large subunit.